A 269-amino-acid chain; its full sequence is Basic leucine zipper 19 (269 aa).

One can recognise a bZIP domain in the interval 140–196 (DPKRVKRILANRQSAQRSRVRKLQYISELERSVTTLQMEVSALSPRVAFLDHQRSLL). Positions 142 to 161 (KRVKRILANRQSAQRSRVRK) are basic motif. Positions 168-196 (LERSVTTLQMEVSALSPRVAFLDHQRSLL) are leucine-zipper.

As to expression, expressed in roots and shoots.

It is found in the nucleus. Functionally, transcription regulator. The chain is Basic leucine zipper 19 (BZIP19) from Oryza sativa subsp. japonica (Rice).